The sequence spans 213 residues: Ras-related protein Rab-2 (213 aa).

The GTP site is built by Thr-15, Gly-16, Gly-18, Lys-19, Ser-20, Cys-21, Gln-32, Pro-33, His-35, Thr-38, Gly-64, Asn-119, Asp-122, and Ala-150. Ser-20 is a Mg(2+) binding site. Thr-38 contacts Mg(2+). The disordered stretch occupies residues 190–213 (QHSPTNPSLPGAGGAAGAANSGCC). Residues Cys-212 and Cys-213 are each lipidated (S-geranylgeranyl cysteine).

This sequence belongs to the small GTPase superfamily. Rab family. In terms of assembly, interacts (GTP-bound form) with Vps16A and Vps39; the interaction with Vps39 is probably direct.

The protein resides in the vesicle. Its subcellular location is the cytoplasmic vesicle. It localises to the cell projection. The protein localises to the axon. It is found in the presynapse. The protein resides in the presynaptic active zone. Its subcellular location is the golgi apparatus. It localises to the trans-Golgi network. The protein localises to the perikaryon. It is found in the autophagosome membrane. The protein resides in the autolysosome membrane. The enzyme catalyses GTP + H2O = GDP + phosphate + H(+). Its function is as follows. May be involved in bidirectional endoplasmic reticulum (ER) to Golgi trafficking. Together with Rab7 involved in promoting fusion of autophagosomes and endosomes with lysosomes, probably through recruitment of the HOPS tethering complex. Involved in biosynthetic transport to lysosomes. In larval motor neurons, mediates the biogenesis of presynaptic cargo vesicles and their long-range axonal trafficking to synaptic termini. Not involved in axonal trafficking of mitochondria. During vesicle biogenesis, active zone proteins (including brp/Bruchpilot) and synaptic vesicle proteins (including VGlut) are sorted from the trans-Golgi in a Rab2-dependent manner via, at least, two independent routes. Acts upstream of Arl8 during presynaptic precursor vesicle biogenesis. Associated with lysosomal marker positive presynaptic cargo vesicles during anterograde and retrograde axonal trafficking, probably while in its GTP-bound active state. Involved in the delivery of presynaptic cargos, but not presynapse assembly or active zone function at synaptic termini. Required for autophagocytosis-dependent remodeling of myofibrils and transverse-tubules (T-tubules) during metamorphosis. The chain is Ras-related protein Rab-2 from Drosophila melanogaster (Fruit fly).